The following is a 93-amino-acid chain: PqqA binding protein (93 aa).

This sequence belongs to the PqqD family. As to quaternary structure, monomer. Interacts with PqqE.

The protein operates within cofactor biosynthesis; pyrroloquinoline quinone biosynthesis. Its function is as follows. Functions as a PqqA binding protein and presents PqqA to PqqE, in the pyrroloquinoline quinone (PQQ) biosynthetic pathway. The chain is PqqA binding protein from Methylococcus capsulatus (strain ATCC 33009 / NCIMB 11132 / Bath).